The chain runs to 312 residues: Ribonuclease Z (312 aa).

Zn(2+) is bound by residues His62, His64, Asp66, His67, His144, Asp215, and His273. The active-site Proton acceptor is Asp66.

It belongs to the RNase Z family. Homodimer. Zn(2+) is required as a cofactor.

It catalyses the reaction Endonucleolytic cleavage of RNA, removing extra 3' nucleotides from tRNA precursor, generating 3' termini of tRNAs. A 3'-hydroxy group is left at the tRNA terminus and a 5'-phosphoryl group is left at the trailer molecule.. In terms of biological role, zinc phosphodiesterase, which displays some tRNA 3'-processing endonuclease activity. Probably involved in tRNA maturation, by removing a 3'-trailer from precursor tRNA. This is Ribonuclease Z from Prochlorococcus marinus (strain MIT 9312).